The sequence spans 767 residues: TBC1 domain family member 16 (767 aa).

Disordered stretches follow at residues 93–138 (EALR…TPKD) and 169–228 (GVDG…SFDS). Residues 107 to 117 (KAPRPRGRRTR) are compositionally biased toward basic residues. The segment covering 175–194 (PASQPACSPSGILSTVSPQD) has biased composition (polar residues). Basic and acidic residues predominate over residues 197 to 206 (EEGREPRPEA). In terms of domain architecture, Rab-GAP TBC spans 425-635 (GIDVSIRGEV…RIWEACWAHY (211 aa)). The disordered stretch occupies residues 729-767 (HPGSESCPYGGTVEMPSPKSLREGKKGPKTPQDGFGFRR).

Functionally, may act as a GTPase-activating protein for Rab family protein(s). This is TBC1 domain family member 16 (TBC1D16) from Homo sapiens (Human).